Reading from the N-terminus, the 354-residue chain is Transcription factor BHLH3 (354 aa).

Residues 124 to 143 (VAEEETSGDKALLHGGGGSS) form a disordered region. The basic motif stretch occupies residues 178–191 (GTPSKNLMAERRRR). The region spanning 178-227 (GTPSKNLMAERRRRKRLNDRLSMLRSIVPKISKMDRTSILGDTIDYVKEL) is the bHLH domain. A helix-loop-helix motif region spans residues 192–227 (KRLNDRLSMLRSIVPKISKMDRTSILGDTIDYVKEL).

The protein belongs to the bHLH protein family. Interacts with LAX1. Phosphorylated by MAPK3 and MAPK6.

The protein localises to the nucleus. Its subcellular location is the cytoplasm. In terms of biological role, transcription factor involved in defense responses that functions downstream of RAC1 and upstream of PAL1 and WRKY19 genes. This chain is Transcription factor BHLH3, found in Oryza sativa subsp. japonica (Rice).